Here is a 564-residue protein sequence, read N- to C-terminus: MKLKFIFLILFFIIGNSIGIKISKEINKIKLNDISIDGEILLNKSSDSSSSQSSKIINIWPMPKKVLNGDITVYISPHFQFTTNLTKSTTLKKAMDRYYKLIFTEDSKSHSGISILNEIKILVKSEDETLQIGFDESYEIYIDDSGDDGGKIIAETVYGAIRGLETLYQMIGFDYQREYYQIKHCPWIIQDSPRYPHRGVMLDTSRHFYSVDVLKEFIEALAYNKFNVFHWHAVDSQSFPLTSTTFPKITKGSWSSQEIYSTRDIKEIIQHAKEYGIRVELEIDMPGHAYSWGIGYPSVLPANFSHSIQCQQPCPTECNIPLDVSSKESYVIAMGLLEEFNGASMFNESFFHIGGDEVAYSCWNNSLRIVDWMKRENISSFQDAAIFFEIKAIEQLIQLGKTPVMWEDAYLLFGSSGITEKLPEEVVVQIYHDPLLALNTTRDGYKTLQSPYWPYYLDNPSVDWEKVYEFEPSNGIHEKRLRLLLGGETCMWSELVDASNLFAKVFPRAFATAERLWFSIENSNSTTFAKPRLERFRCFLLERGIGAAPLNSTSPDDPNSCYSS.

Residues 1 to 19 (MKLKFIFLILFFIIGNSIG) form the signal peptide. Residues Asn-43, Asn-84, Asn-303, and Asn-347 are each glycosylated (N-linked (GlcNAc...) asparagine). The Proton donor role is filled by Glu-357. Residues Asn-364, Asn-377, Asn-439, Asn-524, and Asn-551 are each glycosylated (N-linked (GlcNAc...) asparagine).

Belongs to the glycosyl hydrolase 20 family.

Its subcellular location is the lysosome. It catalyses the reaction Hydrolysis of terminal non-reducing N-acetyl-D-hexosamine residues in N-acetyl-beta-D-hexosaminides.. Its function is as follows. Responsible for the degradation of GM2 gangliosides, and a variety of other molecules containing terminal N-acetyl hexosamines. The protein is Beta-hexosaminidase subunit B2 (hexb2) of Dictyostelium discoideum (Social amoeba).